A 934-amino-acid polypeptide reads, in one-letter code: Protocadherin gamma-C3 (934 aa).

Residues 1–31 (MVPEAWRSGLVSTGRVVGVLLLLGALNKAST) form the signal peptide. Cadherin domains lie at 32-135 (VIHY…NPAF), 136-244 (PTQE…APVF), 245-352 (NQSL…APEI), 353-457 (TVTS…PPQS), 458-567 (SQSS…APQV), and 572-685 (PGGS…APRE). The Extracellular segment spans residues 32 to 693 (VIHYEIPEER…REQKKNLTFY (662 aa)). N-linked (GlcNAc...) asparagine glycans are attached at residues N245, N424, N478, N550, N615, and N689. Residues 694-714 (LLLSLILVSVGFVVTVFGVII) traverse the membrane as a helical segment. Residues 715-934 (FKVYKWKQSR…KKKSGKKEKK (220 aa)) lie on the Cytoplasmic side of the membrane. Disordered stretches follow at residues 804–843 (ESAP…WPNN) and 904–934 (ATLT…KEKK). The span at 812-843 (APPNTDWRFSQAQRPGTSGSQNGDDTGTWPNN) shows a compositional bias: polar residues. Over residues 924–934 (NKKKSGKKEKK) the composition is skewed to basic residues.

Its subcellular location is the cell membrane. Its function is as follows. Potential calcium-dependent cell-adhesion protein. May be involved in the establishment and maintenance of specific neuronal connections in the brain. The protein is Protocadherin gamma-C3 (PCDHGC3) of Homo sapiens (Human).